A 327-amino-acid chain; its full sequence is tRNA dimethylallyltransferase (327 aa).

Glycine 14 to threonine 21 contributes to the ATP binding site. Threonine 16 to threonine 21 is a binding site for substrate. Interaction with substrate tRNA regions lie at residues aspartate 39–leucine 42 and glutamine 163–arginine 167.

Belongs to the IPP transferase family. Monomer. Mg(2+) serves as cofactor.

The enzyme catalyses adenosine(37) in tRNA + dimethylallyl diphosphate = N(6)-dimethylallyladenosine(37) in tRNA + diphosphate. Catalyzes the transfer of a dimethylallyl group onto the adenine at position 37 in tRNAs that read codons beginning with uridine, leading to the formation of N6-(dimethylallyl)adenosine (i(6)A). The polypeptide is tRNA dimethylallyltransferase (Xanthomonas oryzae pv. oryzae (strain PXO99A)).